The following is an 80-amino-acid chain: Small ribosomal subunit protein bS18 (80 aa).

It belongs to the bacterial ribosomal protein bS18 family. As to quaternary structure, part of the 30S ribosomal subunit. Forms a tight heterodimer with protein bS6.

In terms of biological role, binds as a heterodimer with protein bS6 to the central domain of the 16S rRNA, where it helps stabilize the platform of the 30S subunit. The chain is Small ribosomal subunit protein bS18 from Staphylococcus epidermidis (strain ATCC 35984 / DSM 28319 / BCRC 17069 / CCUG 31568 / BM 3577 / RP62A).